We begin with the raw amino-acid sequence, 193 residues long: Ion-translocating oxidoreductase complex subunit B (193 aa).

A hydrophobic region spans residues methionine 1–alanine 26. The region spanning glutamate 32–valine 90 is the 4Fe-4S domain. Residues cysteine 49, cysteine 52, cysteine 57, cysteine 73, cysteine 114, cysteine 117, cysteine 120, cysteine 124, cysteine 144, cysteine 147, cysteine 150, and cysteine 154 each contribute to the [4Fe-4S] cluster site. 4Fe-4S ferredoxin-type domains are found at residues lysine 105–lysine 134 and methionine 136–valine 164.

It belongs to the 4Fe4S bacterial-type ferredoxin family. RnfB subfamily. In terms of assembly, the complex is composed of six subunits: RnfA, RnfB, RnfC, RnfD, RnfE and RnfG. [4Fe-4S] cluster is required as a cofactor.

Its subcellular location is the cell inner membrane. In terms of biological role, part of a membrane-bound complex that couples electron transfer with translocation of ions across the membrane. The polypeptide is Ion-translocating oxidoreductase complex subunit B (Shewanella sp. (strain ANA-3)).